The following is a 184-amino-acid chain: MNHPVAVALSDFSSLFLQAWRDTGHGFPRSEDLVGLESPCVEHDSGDEVTWKPITRQPQGDLAGVEKGIEIELHKDIIDFYSTQFSGDMAAKFGEIELDLLQVFSEQDGVRLQENILGHLVTQRRLKLKPTVFIGVIDSADKVIAICNLTGEVILETLGKNERDVLAKDVASFLQQLVPVVREA.

The protein belongs to the Syd family.

The protein resides in the cell inner membrane. Its function is as follows. Interacts with the SecY protein in vivo. May bind preferentially to an uncomplexed state of SecY, thus functioning either as a chelating agent for excess SecY in the cell or as a regulatory factor that negatively controls the translocase function. This is Protein Syd from Photobacterium profundum (strain SS9).